Reading from the N-terminus, the 963-residue chain is Adhesion G protein-coupled receptor D2 (963 aa).

At M1–S662 the chain is on the extracellular side. The disordered stretch occupies residues D18 to G38. Residues T116–C325 form the Pentraxin (PTX) domain. C146 and C212 are disulfide-bonded. Residue N271 is glycosylated (N-linked (GlcNAc...) asparagine). The 161-residue stretch at M489–Q649 folds into the GAIN-B domain. Residues P599–Q649 form a GPS region. A disulfide bridge links C619 with C633. The N-linked (GlcNAc...) asparagine glycan is linked to N634. A helical membrane pass occupies residues F663–A683. Over G684 to T691 the chain is Cytoplasmic. The helical transmembrane segment at T692–E712 threads the bilayer. The Extracellular segment spans residues W713–A720. The helical transmembrane segment at C721–V741 threads the bilayer. At E742–R762 the chain is on the cytoplasmic side. Residues L763–L783 form a helical membrane-spanning segment. Residues P784 to N800 lie on the Extracellular side of the membrane. A helical transmembrane segment spans residues A801–A821. Over R822–K857 the chain is Cytoplasmic. Residues P858 to L878 traverse the membrane as a helical segment. Topologically, residues S879 to P880 are extracellular. A helical membrane pass occupies residues A881–Y901. Topologically, residues A902–A963 are cytoplasmic.

Belongs to the G-protein coupled receptor 2 family. Adhesion G-protein coupled receptor (ADGR) subfamily.

The protein resides in the membrane. Its function is as follows. Orphan receptor. This chain is Adhesion G protein-coupled receptor D2 (ADGRD2), found in Homo sapiens (Human).